A 469-amino-acid polypeptide reads, in one-letter code: MAQTLYDKLWNTHVVHTEEDGTTLLYIDRQLLHEVTSPQAFEGLKIAQRPVWRISANLAVSDHNVPTTDRSHGIADPVSKLQVDTLDANCDAFGITQFKMNDVRQGIVHIIGPEQGATLPGMTIVCGDSHTSTHGAFGALAHGIGTSEVEHVLATQTLLQKKSKNMLVKVEGTLPRGCTAKDIVLAIIGKIGTAGGTGYAIEFGGSTIRALTMEGRMTVCNMAIEAGARAGMVAVDDTTIDYLKGRPFVPTGAEWNQAVEYWRQFKSDDGAQFDRVVELNAAEIVPQVTWGTSPEMVTSIDGRVPDPEREKDPVKRDAMERALAYMALEPNTPIESIKVDKIFIGSCTNARIEDIRAAAYVVKKLNRRVASNVRLAMVVPGSGLVKAQAEREGLDKVFTDAGFEWREPGCSMCLAMNADRLDPGERCASTSNRNFEGRQGAGGRTHLVSPAMAAAAAIEGHFVDIRQLG.

Cysteine 347, cysteine 410, and cysteine 413 together coordinate [4Fe-4S] cluster.

It belongs to the aconitase/IPM isomerase family. LeuC type 1 subfamily. In terms of assembly, heterodimer of LeuC and LeuD. It depends on [4Fe-4S] cluster as a cofactor.

The enzyme catalyses (2R,3S)-3-isopropylmalate = (2S)-2-isopropylmalate. It participates in amino-acid biosynthesis; L-leucine biosynthesis; L-leucine from 3-methyl-2-oxobutanoate: step 2/4. Catalyzes the isomerization between 2-isopropylmalate and 3-isopropylmalate, via the formation of 2-isopropylmaleate. This chain is 3-isopropylmalate dehydratase large subunit, found in Burkholderia lata (strain ATCC 17760 / DSM 23089 / LMG 22485 / NCIMB 9086 / R18194 / 383).